Consider the following 226-residue polypeptide: High affinity heme transporter (226 aa).

An N-terminal signal peptide occupies residues 1-20 (MISLKIYFVLIFLFLKGINS). The segment at 72–101 (CDTTILSETNNVTGSCYVANCANDTVLEIC) is heme binding. The GPI-anchor amidated serine moiety is linked to residue serine 199. Positions 200-226 (SASSTIFKPSYFISCLLSVGLYLVLNF) are cleaved as a propeptide — removed in mature form.

The protein resides in the cell membrane. Its subcellular location is the vacuole membrane. High affinity heme transporter involved in the assimilation of exogenous heme during conditions of low cellular iron. This chain is High affinity heme transporter, found in Schizosaccharomyces pombe (strain 972 / ATCC 24843) (Fission yeast).